We begin with the raw amino-acid sequence, 206 residues long: ATP-dependent Clp protease proteolytic subunit 1 (206 aa).

Serine 103 serves as the catalytic Nucleophile. Histidine 128 is a catalytic residue.

The protein belongs to the peptidase S14 family. In terms of assembly, fourteen ClpP subunits assemble into 2 heptameric rings which stack back to back to give a disk-like structure with a central cavity, resembling the structure of eukaryotic proteasomes.

It is found in the cytoplasm. The enzyme catalyses Hydrolysis of proteins to small peptides in the presence of ATP and magnesium. alpha-casein is the usual test substrate. In the absence of ATP, only oligopeptides shorter than five residues are hydrolyzed (such as succinyl-Leu-Tyr-|-NHMec, and Leu-Tyr-Leu-|-Tyr-Trp, in which cleavage of the -Tyr-|-Leu- and -Tyr-|-Trp bonds also occurs).. In terms of biological role, cleaves peptides in various proteins in a process that requires ATP hydrolysis. Has a chymotrypsin-like activity. Plays a major role in the degradation of misfolded proteins. This is ATP-dependent Clp protease proteolytic subunit 1 from Protochlamydia amoebophila (strain UWE25).